Consider the following 380-residue polypeptide: Cytochrome b (380 aa).

4 helical membrane-spanning segments follow: residues 33–53 (FGSL…FLAM), 77–98 (WLIR…YLHI), 113–133 (WNVG…GYVL), and 178–198 (FFAF…IHLL). Heme b is bound by residues histidine 83 and histidine 97. Residues histidine 182 and histidine 196 each contribute to the heme b site. Histidine 201 provides a ligand contact to a ubiquinone. Helical transmembrane passes span 226–246 (YKDL…ALFS), 288–308 (LGGV…PILH), 320–340 (ITQF…WIGG), and 347–367 (FIII…VLTP).

The protein belongs to the cytochrome b family. As to quaternary structure, the cytochrome bc1 complex contains 3 respiratory subunits (MT-CYB, CYC1 and UQCRFS1), 2 core proteins (UQCRC1 and UQCRC2) and probably 6 low-molecular weight proteins. Heme b is required as a cofactor.

It is found in the mitochondrion inner membrane. Component of the ubiquinol-cytochrome c reductase complex (complex III or cytochrome b-c1 complex) that is part of the mitochondrial respiratory chain. The b-c1 complex mediates electron transfer from ubiquinol to cytochrome c. Contributes to the generation of a proton gradient across the mitochondrial membrane that is then used for ATP synthesis. This is Cytochrome b (mt-cyb) from Dactyloptena peterseni (Starry flying gurnard).